A 515-amino-acid polypeptide reads, in one-letter code: Zinc metalloproteinase-disintegrin-like EoMP06 (515 aa).

A propeptide spanning residues 1 to 94 is cleaved from the precursor; the sequence is VEDHCYYHGR…TLGLIVPPHG (94 aa). A Pyrrolidone carboxylic acid modification is found at Q95. One can recognise a Peptidase M12B domain in the interval 100-296; the sequence is KFIELIIVVD…YNPKCIVDPP (197 aa). E103 provides a ligand contact to Ca(2+). N-linked (GlcNAc...) asparagine glycosylation occurs at N160. Position 187 (D187) interacts with Ca(2+). N-linked (GlcNAc...) asparagine glycans are attached at residues N194 and N225. 3 disulfides stabilise this stretch: C211–C291, C251–C275, and C253–C258. H236 lines the Zn(2+) pocket. The active site involves E237. The Zn(2+) site is built by H240 and H246. Ca(2+) is bound by residues C291, V306, N309, V311, E313, E316, and D319. Residues 304-390 form the Disintegrin domain; that stretch reads PAVCGNGVWE…ECPRNEFQRN (87 aa). Cystine bridges form between C307–C336, C318–C331, C320–C326, C330–C353, C344–C350, C349–C375, C362–C382, C369–C401, C394–C406, C413–C466, C428–C477, C441–C454, C461–C503, and C497–C508. The D/ECD-tripeptide motif lies at 368–370; it reads DCD. 3 residues coordinate Ca(2+): D370, V371, and N385.

It belongs to the venom metalloproteinase (M12B) family. P-III subfamily. P-IIIa sub-subfamily. As to quaternary structure, monomer. The cofactor is Zn(2+). As to expression, expressed by the venom gland.

It localises to the secreted. In terms of biological role, snake venom zinc metalloproteinase that catalyzes the conversion of prothrombin (F2) to alpha-thrombin through formation of a thrombin intermediate, thereby functioning as a procoagulant protein. This Echis ocellatus (Ocellated saw-scaled viper) protein is Zinc metalloproteinase-disintegrin-like EoMP06.